The chain runs to 209 residues: Imidazole glycerol phosphate synthase subunit HisH (209 aa).

One can recognise a Glutamine amidotransferase type-1 domain in the interval 1–205 (MIAIIDYGMG…KGVVEAWKSS (205 aa)). The active-site Nucleophile is the Cys79. Catalysis depends on residues His180 and Glu182.

As to quaternary structure, heterodimer of HisH and HisF.

Its subcellular location is the cytoplasm. The catalysed reaction is 5-[(5-phospho-1-deoxy-D-ribulos-1-ylimino)methylamino]-1-(5-phospho-beta-D-ribosyl)imidazole-4-carboxamide + L-glutamine = D-erythro-1-(imidazol-4-yl)glycerol 3-phosphate + 5-amino-1-(5-phospho-beta-D-ribosyl)imidazole-4-carboxamide + L-glutamate + H(+). It carries out the reaction L-glutamine + H2O = L-glutamate + NH4(+). It participates in amino-acid biosynthesis; L-histidine biosynthesis; L-histidine from 5-phospho-alpha-D-ribose 1-diphosphate: step 5/9. Functionally, IGPS catalyzes the conversion of PRFAR and glutamine to IGP, AICAR and glutamate. The HisH subunit catalyzes the hydrolysis of glutamine to glutamate and ammonia as part of the synthesis of IGP and AICAR. The resulting ammonia molecule is channeled to the active site of HisF. In Bacillus mycoides (strain KBAB4) (Bacillus weihenstephanensis), this protein is Imidazole glycerol phosphate synthase subunit HisH.